A 179-amino-acid chain; its full sequence is Large ribosomal subunit protein uL6 (179 aa).

The protein belongs to the universal ribosomal protein uL6 family. In terms of assembly, part of the 50S ribosomal subunit.

In terms of biological role, this protein binds to the 23S rRNA, and is important in its secondary structure. It is located near the subunit interface in the base of the L7/L12 stalk, and near the tRNA binding site of the peptidyltransferase center. This Geobacter sulfurreducens (strain ATCC 51573 / DSM 12127 / PCA) protein is Large ribosomal subunit protein uL6.